We begin with the raw amino-acid sequence, 483 residues long: tRNA sulfurtransferase (483 aa).

A THUMP domain is found at 63 to 167 (GQLIDMLART…DDQVYLVTKK (105 aa)). ATP is bound by residues 185–186 (LI), lysine 267, glycine 289, and glutamine 298. A disulfide bridge links cysteine 346 with cysteine 457. The Rhodanese domain occupies 405-483 (LPVSAKVIDI…GYTNVGVYRP (79 aa)). Residue cysteine 457 is the Cysteine persulfide intermediate of the active site.

This sequence belongs to the ThiI family.

It localises to the cytoplasm. It carries out the reaction [ThiI sulfur-carrier protein]-S-sulfanyl-L-cysteine + a uridine in tRNA + 2 reduced [2Fe-2S]-[ferredoxin] + ATP + H(+) = [ThiI sulfur-carrier protein]-L-cysteine + a 4-thiouridine in tRNA + 2 oxidized [2Fe-2S]-[ferredoxin] + AMP + diphosphate. The catalysed reaction is [ThiS sulfur-carrier protein]-C-terminal Gly-Gly-AMP + S-sulfanyl-L-cysteinyl-[cysteine desulfurase] + AH2 = [ThiS sulfur-carrier protein]-C-terminal-Gly-aminoethanethioate + L-cysteinyl-[cysteine desulfurase] + A + AMP + 2 H(+). It functions in the pathway cofactor biosynthesis; thiamine diphosphate biosynthesis. Its function is as follows. Catalyzes the ATP-dependent transfer of a sulfur to tRNA to produce 4-thiouridine in position 8 of tRNAs, which functions as a near-UV photosensor. Also catalyzes the transfer of sulfur to the sulfur carrier protein ThiS, forming ThiS-thiocarboxylate. This is a step in the synthesis of thiazole, in the thiamine biosynthesis pathway. The sulfur is donated as persulfide by IscS. The polypeptide is tRNA sulfurtransferase (Saccharophagus degradans (strain 2-40 / ATCC 43961 / DSM 17024)).